A 150-amino-acid chain; its full sequence is 3-hydroxyacyl-[acyl-carrier-protein] dehydratase FabZ (150 aa).

The active site involves His54.

Belongs to the thioester dehydratase family. FabZ subfamily.

It is found in the cytoplasm. The enzyme catalyses a (3R)-hydroxyacyl-[ACP] = a (2E)-enoyl-[ACP] + H2O. Its function is as follows. Involved in unsaturated fatty acids biosynthesis. Catalyzes the dehydration of short chain beta-hydroxyacyl-ACPs and long chain saturated and unsaturated beta-hydroxyacyl-ACPs. The polypeptide is 3-hydroxyacyl-[acyl-carrier-protein] dehydratase FabZ (Vibrio vulnificus (strain CMCP6)).